A 426-amino-acid polypeptide reads, in one-letter code: Enolase (426 aa).

Glutamine 163 is a binding site for (2R)-2-phosphoglycerate. Glutamate 205 acts as the Proton donor in catalysis. Mg(2+)-binding residues include aspartate 242, glutamate 285, and aspartate 312. 4 residues coordinate (2R)-2-phosphoglycerate: lysine 337, arginine 366, serine 367, and lysine 388. The Proton acceptor role is filled by lysine 337.

Belongs to the enolase family. The cofactor is Mg(2+).

It localises to the cytoplasm. The protein resides in the secreted. The protein localises to the cell surface. It carries out the reaction (2R)-2-phosphoglycerate = phosphoenolpyruvate + H2O. It participates in carbohydrate degradation; glycolysis; pyruvate from D-glyceraldehyde 3-phosphate: step 4/5. In terms of biological role, catalyzes the reversible conversion of 2-phosphoglycerate (2-PG) into phosphoenolpyruvate (PEP). It is essential for the degradation of carbohydrates via glycolysis. In Desulfosudis oleivorans (strain DSM 6200 / JCM 39069 / Hxd3) (Desulfococcus oleovorans), this protein is Enolase.